The primary structure comprises 429 residues: MSLIVIGLNHKTAPVEIREKIAFNSKEAIKEALKELIQREGIGEVVIISTCNRVEIYVYTANVSDLKRENQVEETIKAFLSNFHNIEIGEFENYLYVYKDTEAVEHLFKVASSLDSMIVGEPQITGQVKESYEIALSERTTSLILNYLMNRALFTAKRVRNETRIGENPVSVSYAAVGLIKKVFDELSKKSILLVGAGEMAELALRHLIGSGIKNVYLTNRTFQRAEEIAKEFNGVAVPFGNLKEQLVKTDIVICSTGAPHYVITEQMLKEVMPLRKHKPIFFIDISVPRNVDPACNELDNVYLYNIDDLQDVVDSNILERKKEAEKALSIVQEETEKFFQWLNSLESVPVIVSIRNKAEQVRQEEIEKFKAKYKDLPPELINSIDYLTQSIINKIMHSPTVALKNNCENKEILIFSARRLFGLDSEEE.

Substrate is bound by residues 50-53 (TCNR), S116, 121-123 (EPQ), and Q127. The active-site Nucleophile is C51. 196 to 201 (GAGEMA) is a binding site for NADP(+).

The protein belongs to the glutamyl-tRNA reductase family. Homodimer.

The catalysed reaction is (S)-4-amino-5-oxopentanoate + tRNA(Glu) + NADP(+) = L-glutamyl-tRNA(Glu) + NADPH + H(+). The protein operates within porphyrin-containing compound metabolism; protoporphyrin-IX biosynthesis; 5-aminolevulinate from L-glutamyl-tRNA(Glu): step 1/2. Catalyzes the NADPH-dependent reduction of glutamyl-tRNA(Glu) to glutamate 1-semialdehyde (GSA). The chain is Glutamyl-tRNA reductase from Thermodesulfovibrio yellowstonii (strain ATCC 51303 / DSM 11347 / YP87).